We begin with the raw amino-acid sequence, 218 residues long: Stress response regulator protein 1 (218 aa).

The 120-residue stretch at 90–209 folds into the Response regulatory domain; it reads RFLLVDDNSI…YRVVLDVVDN (120 aa). At D142 the chain carries 4-aspartylphosphate.

In terms of biological role, required for stress adaptation, morphogenesis and virulence. The chain is Stress response regulator protein 1 (SRR1) from Meyerozyma guilliermondii (strain ATCC 6260 / CBS 566 / DSM 6381 / JCM 1539 / NBRC 10279 / NRRL Y-324) (Yeast).